Consider the following 647-residue polypeptide: DNA ligase (647 aa).

Residues 30 to 34, 79 to 80, and Glu105 each bind NAD(+); these read DEEYD and SM. Lys107 serves as the catalytic N6-AMP-lysine intermediate. Positions 128, 162, and 301 each coordinate NAD(+). The Zn(2+) site is built by Cys395, Cys398, Cys411, and Cys416. The region spanning 570 to 647 is the BRCT domain; it reads KSDGVIFGKT…ESAFNELVKE (78 aa).

Belongs to the NAD-dependent DNA ligase family. LigA subfamily. Mg(2+) is required as a cofactor. Mn(2+) serves as cofactor.

The enzyme catalyses NAD(+) + (deoxyribonucleotide)n-3'-hydroxyl + 5'-phospho-(deoxyribonucleotide)m = (deoxyribonucleotide)n+m + AMP + beta-nicotinamide D-nucleotide.. Functionally, DNA ligase that catalyzes the formation of phosphodiester linkages between 5'-phosphoryl and 3'-hydroxyl groups in double-stranded DNA using NAD as a coenzyme and as the energy source for the reaction. It is essential for DNA replication and repair of damaged DNA. The protein is DNA ligase of Campylobacter jejuni subsp. jejuni serotype O:23/36 (strain 81-176).